Reading from the N-terminus, the 690-residue chain is Tripartite terminase subunit 3 (690 aa).

Residues I226–T233 carry the Walker A motif motif. The Walker B motif signature appears at L321–E326. E326 serves as the catalytic For ATPase activity. Catalysis depends on for nuclease activity residues D481, E555, and D667.

The protein belongs to the herpesviridae TRM3 protein family. As to quaternary structure, interacts with the terminase subunits TRM1 and TRM2. Interacts with portal protein.

The protein resides in the host nucleus. Component of the molecular motor that translocates viral genomic DNA in empty capsid during DNA packaging. Forms a tripartite terminase complex together with TRM1 and TRM2 in the host cytoplasm. Once the complex reaches the host nucleus, it interacts with the capsid portal vertex. This portal forms a ring in which genomic DNA is translocated into the capsid. TRM3 carries an RNase H-like nuclease activity that plays an important role for the cleavage of concatemeric viral DNA into unit length genomes. This Homo sapiens (Human) protein is Tripartite terminase subunit 3.